The sequence spans 436 residues: GTPase Der (436 aa).

EngA-type G domains are found at residues 4 to 167 (PIVA…PDEA) and 175 to 351 (IRFS…DNHR). GTP contacts are provided by residues 10 to 17 (GRPNVGKS), 57 to 61 (DTGGI), 119 to 122 (NKVD), 181 to 188 (GRPNVGKS), 229 to 233 (DTAGM), and 294 to 297 (NKWD). The region spanning 352–436 (KRITSSTLND…PIKLIVRARK (85 aa)) is the KH-like domain.

It belongs to the TRAFAC class TrmE-Era-EngA-EngB-Septin-like GTPase superfamily. EngA (Der) GTPase family. As to quaternary structure, associates with the 50S ribosomal subunit.

In terms of biological role, GTPase that plays an essential role in the late steps of ribosome biogenesis. This chain is GTPase Der, found in Leuconostoc mesenteroides subsp. mesenteroides (strain ATCC 8293 / DSM 20343 / BCRC 11652 / CCM 1803 / JCM 6124 / NCDO 523 / NBRC 100496 / NCIMB 8023 / NCTC 12954 / NRRL B-1118 / 37Y).